Consider the following 94-residue polypeptide: Large ribosomal subunit protein bL25 (94 aa).

It belongs to the bacterial ribosomal protein bL25 family. As to quaternary structure, part of the 50S ribosomal subunit; part of the 5S rRNA/L5/L18/L25 subcomplex. Contacts the 5S rRNA. Binds to the 5S rRNA independently of L5 and L18.

This is one of the proteins that binds to the 5S RNA in the ribosome where it forms part of the central protuberance. This chain is Large ribosomal subunit protein bL25, found in Pectobacterium atrosepticum (strain SCRI 1043 / ATCC BAA-672) (Erwinia carotovora subsp. atroseptica).